The primary structure comprises 625 residues: PTS system beta-glucoside-specific EIIBCA component (625 aa).

One can recognise a PTS EIIB type-1 domain in the interval 1–84 (MTELARKIVA…NSVAGLDEKA (84 aa)). Topologically, residues 1–99 (MTELARKIVA…NDDKGNLLNR (99 aa)) are periplasmic. The active-site Phosphocysteine intermediate; for EIIB activity is Cys-24. A helical transmembrane segment spans residues 100–120 (FVYVISGIFTPLIGLMAATGI). The 364-residue stretch at 102 to 465 (YVISGIFTPL…RQPAQGAPQE (364 aa)) folds into the PTS EIIC type-1 domain. Residues 121 to 140 (LKGMLALALTFQWTTEQSGT) are Cytoplasmic-facing. A helical membrane pass occupies residues 141–161 (YLILFSASDALFWFFPIILGY). The Periplasmic segment spans residues 162 to 166 (TAGKR). A helical transmembrane segment spans residues 167 to 187 (FGGNPFTAMVIGGALVHPLIL). The Cytoplasmic portion of the chain corresponds to 188-202 (TAFENGQKADALGLD). Residues 203–223 (FLGIPVTLLNYSSSVIPIIFS) traverse the membrane as a helical segment. Residues 224–244 (AWLCSILERRLNAWLPSAIKN) are Periplasmic-facing. The chain crosses the membrane as a helical span at residues 245–265 (FFTPLLCLMVITPVTFLLVGP). At 266-284 (LSTWISELIAAGYLWLYQA) the chain is on the cytoplasmic side. A helical membrane pass occupies residues 285–305 (VPAFAGAVMGGFWQIFVMFGL). Residues 306–324 (HWGLVPLCINNFTVLGYDT) lie on the Periplasmic side of the membrane. A helical transmembrane segment spans residues 325 to 345 (MIPLLMPAIMAQVGAALGVFL). The Cytoplasmic portion of the chain corresponds to 346 to 353 (CERDAQKK). A helical transmembrane segment spans residues 354 to 374 (VVAGSAALTSLFGITEPAVYG). At 375-380 (VNLPRK) the chain is on the periplasmic side. A helical transmembrane segment spans residues 381–401 (YPFVIACISGALGATIIGYAQ). The Cytoplasmic portion of the chain corresponds to 402 to 403 (TK). A helical membrane pass occupies residues 404–424 (VYSFGLPSIFTFMQTIPSTGI). Topologically, residues 425-431 (DFTVWAS) are periplasmic. Residues 432 to 452 (VIGGVIAIGCAFVGTVMLHFI) traverse the membrane as a helical segment. The Cytoplasmic portion of the chain corresponds to 453 to 625 (TAKRQPAQGA…AGEPLLSIIR (173 aa)). The PTS EIIA type-1 domain occupies 495–599 (DTTFASGLLG…DLTTPVLISN (105 aa)). His-547 (tele-phosphohistidine intermediate; for EIIA activity) is an active-site residue.

Its subcellular location is the cell inner membrane. The phosphoenolpyruvate-dependent sugar phosphotransferase system (sugar PTS), a major carbohydrate active -transport system, catalyzes the phosphorylation of incoming sugar substrates concomitantly with their translocation across the cell membrane. This system is involved in beta-glucoside transport. Its function is as follows. Acts both as a kinase and as a phosphatase on BglG. The chain is PTS system beta-glucoside-specific EIIBCA component (bglF) from Escherichia coli (strain K12).